Reading from the N-terminus, the 313-residue chain is MTHVPVLYTQAMEGLRVVENGTYLDGTFGRGGHARGVLQQLGPGGRLLVMDKDPEAIAMAERAFSCDPRVVIRHGSFALLAQLAAPQSLDGVLFDLGVSSPQLDVPERGFSFAKDGPLDMRMDPEMGESAAQWLARVSEREIADVLWTYGEEKQSRRIARAIVAYRANQPLLRTVQLAELIASVMLRTKFGACKSRIHPATRSFQGIRIHVNRELVDLEVGLEAALAALRPGGRLVVISFHSLEDRIVKQFISRHSKVPPTNRRLPEVQTFVPLLRMIGRAIKADEDELEVNPRARSAVLRVAEKLDVLGAVR.

Residues 31–33 (GGH), Asp51, Phe77, Asp95, and Gln102 each bind S-adenosyl-L-methionine.

This sequence belongs to the methyltransferase superfamily. RsmH family.

The protein resides in the cytoplasm. The enzyme catalyses cytidine(1402) in 16S rRNA + S-adenosyl-L-methionine = N(4)-methylcytidine(1402) in 16S rRNA + S-adenosyl-L-homocysteine + H(+). In terms of biological role, specifically methylates the N4 position of cytidine in position 1402 (C1402) of 16S rRNA. This Xylella fastidiosa (strain M23) protein is Ribosomal RNA small subunit methyltransferase H.